Consider the following 206-residue polypeptide: Recombination protein RecR (206 aa).

A C4-type zinc finger spans residues 60–75 (CAMCNTFCEGGLCDIC). In terms of domain architecture, Toprim spans 83 to 178 (RRLMVVHMPA…KVSRLSQGIP (96 aa)).

The protein belongs to the RecR family.

In terms of biological role, may play a role in DNA repair. It seems to be involved in an RecBC-independent recombinational process of DNA repair. It may act with RecF and RecO. In Neisseria meningitidis serogroup B (strain ATCC BAA-335 / MC58), this protein is Recombination protein RecR.